We begin with the raw amino-acid sequence, 443 residues long: F-box only protein 39 (443 aa).

The region spanning 16 to 61 is the F-box domain; the sequence is WATLPDVCLRRVFWWLGDRDRSRAALVCRKWNQMMYSADLWRYRTI.

Directly interacts with SKP1 and CUL1.

Its function is as follows. Substrate-recognition component of the SCF (SKP1-CUL1-F-box protein)-type E3 ubiquitin ligase complex. This chain is F-box only protein 39 (FBXO39), found in Bos taurus (Bovine).